A 222-amino-acid polypeptide reads, in one-letter code: 25 kDa elongation factor 1-beta (222 aa).

Low complexity predominate over residues 75–94 (TSASAPAKQAPKKAASAPAK). Positions 75–98 (TSASAPAKQAPKKAASAPAKQADE) are disordered.

It belongs to the EF-1-beta/EF-1-delta family. In terms of assembly, EF-1 is composed of 4 subunits: alpha, beta, delta, and gamma.

Its function is as follows. EF-1-beta and EF-1-delta stimulate the exchange of GDP bound to EF-1-alpha to GTP. The protein is 25 kDa elongation factor 1-beta of Trypanosoma cruzi.